A 529-amino-acid polypeptide reads, in one-letter code: MQQRRPIRRALLSVSDKAGIIEFATALSQRGIELLSTGGTARLLADAGLPVTEVSDYTGFPEMMDGRVKTLHPKVHGGILGRRGQDDGIMAQHDIQPIDIVVVNLYPFAQTVARPDCSLEDAVENIDIGGPTMVRSAAKNHKDVAIVVKSSDYPAIIAELDENDGSLTYPTRFNLAIKAFEHTAAYDSMIANYFGALVPAYHGDTEQPSGRFPRTLNLNYIKKQDMRYGENSHQQAAFYIEEDVKEASVATALQLQGKALSYNNIADTDAALECVKEFSEPACVIVKHANPCGVAIADSLLAAYDKAYKTDPTSAFGGIIAFNRELDAETASAIISRQFVEVIIAPSVSTEALALLAAKQNVRVLTCGQWQERSAGLDFKRVNGGLLVQDRDLGMVTEADLRVVSQRQPTEQELRDALFCWKVAKFVKSNAIVYARDNMTIGIGAGQMSRVYSAKIAGIKAADEGLEVAGSAMASDAFFPFRDGIDAAAAVGITCVIQPGGSIRDDEVIAAADEHGIAMIFTDMRHFRH.

Residues 1–148 (MQQRRPIRRA…KNHKDVAIVV (148 aa)) enclose the MGS-like domain.

Belongs to the PurH family.

The enzyme catalyses (6R)-10-formyltetrahydrofolate + 5-amino-1-(5-phospho-beta-D-ribosyl)imidazole-4-carboxamide = 5-formamido-1-(5-phospho-D-ribosyl)imidazole-4-carboxamide + (6S)-5,6,7,8-tetrahydrofolate. It catalyses the reaction IMP + H2O = 5-formamido-1-(5-phospho-D-ribosyl)imidazole-4-carboxamide. It participates in purine metabolism; IMP biosynthesis via de novo pathway; 5-formamido-1-(5-phospho-D-ribosyl)imidazole-4-carboxamide from 5-amino-1-(5-phospho-D-ribosyl)imidazole-4-carboxamide (10-formyl THF route): step 1/1. It functions in the pathway purine metabolism; IMP biosynthesis via de novo pathway; IMP from 5-formamido-1-(5-phospho-D-ribosyl)imidazole-4-carboxamide: step 1/1. This Yersinia enterocolitica serotype O:8 / biotype 1B (strain NCTC 13174 / 8081) protein is Bifunctional purine biosynthesis protein PurH.